A 769-amino-acid polypeptide reads, in one-letter code: MQSRLLPSGPGRRWISLRVPNTPQRRAFASTRFLFQDVFQSQLDDPSSAALFSSLQSSRAVPQTLTEKIVQKYAVGLPDGKFVKSGDYVTIAPHRIMTHDNSWPVALKFMSIGASKMHDPNQVVMTLDHDVQNKTEKNLQKYRQIEEFAKQHGVEFYPAGRGIGHQIMVEEGFAWPGTLVVASDSHSNTYGAVASVGTPIVRTDAASIWATGKTWWQIPPVAKVTFTGILPPGVTGKDVIVALCGLFDKDDVLNHAIEFTGSEETMRSLPMDSRLTIANMTTEWGALSGLFPMDGVLKGWLKGKATTAAMGLADGPFKTLAARNFTHPAIEQLFVNPLTADKGAKYAKELFLDLSTLSPYVSGPNSVKIATPLKELEAQDIKVDKAYLVSCTNSRASDIAAAAKVFKDAAEKNGGKVPKIADGVKFYIAAASIPEQLAAEGAGDWQTLLEAGATALPAGCGPCIGLGTGLLEPGEVGISASNRNFKGRMGSTEAKAYLGSPEIVAASALSGKLSGPGWYQPPEGWTEVVRGEGDGIREEDRMLNTEQALEKLLGQLDDLVADGEKRFAPEEKVEEEGGLTEVYPGFPERVSGEIVFCDADNLNTDAIYPGYWTYQDNVPVEKMAEVCMSNYDKEFASIAKEGDILVVGYNFGCGSSREQAATALLAKQIPLVVSGSFGNIFSRNSINNALMGLEVPRLVSRLREEFGDKQLTRRTGWTLTWDVRRSQIEIQEGQNGPKWTHKVGELPPNVQEIIAKGGLEKWVKNAIEA.

The transit peptide at 1-28 directs the protein to the mitochondrion; that stretch reads MQSRLLPSGPGRRWISLRVPNTPQRRAF. Positions 391, 460, and 463 each coordinate [4Fe-4S] cluster.

It belongs to the aconitase/IPM isomerase family. [4Fe-4S] cluster is required as a cofactor.

The protein resides in the mitochondrion. It catalyses the reaction (2R,3S)-homoisocitrate = cis-homoaconitate + H2O. Its pathway is amino-acid biosynthesis; L-lysine biosynthesis via AAA pathway; L-alpha-aminoadipate from 2-oxoglutarate: step 3/5. Functionally, catalyzes the reversible hydration of cis-homoaconitate to (2R,3S)-homoisocitrate, a step in the alpha-aminoadipate pathway for lysine biosynthesis. This is Homoaconitase, mitochondrial (lysA) from Aspergillus niger (strain ATCC MYA-4892 / CBS 513.88 / FGSC A1513).